A 354-amino-acid polypeptide reads, in one-letter code: 3-isopropylmalate dehydrogenase (354 aa).

Residue 76-87 (GPRWDSAKERPE) coordinates NAD(+). Substrate-binding residues include arginine 94, arginine 104, arginine 130, and aspartate 215. 3 residues coordinate Mg(2+): aspartate 215, aspartate 239, and aspartate 243. NAD(+) is bound at residue 273–285 (GSAPDIAGKNKAN).

Belongs to the isocitrate and isopropylmalate dehydrogenases family. LeuB type 1 subfamily. In terms of assembly, homodimer. Requires Mg(2+) as cofactor. Mn(2+) serves as cofactor.

Its subcellular location is the cytoplasm. The catalysed reaction is (2R,3S)-3-isopropylmalate + NAD(+) = 4-methyl-2-oxopentanoate + CO2 + NADH. The protein operates within amino-acid biosynthesis; L-leucine biosynthesis; L-leucine from 3-methyl-2-oxobutanoate: step 3/4. Its function is as follows. Catalyzes the oxidation of 3-carboxy-2-hydroxy-4-methylpentanoate (3-isopropylmalate) to 3-carboxy-4-methyl-2-oxopentanoate. The product decarboxylates to 4-methyl-2 oxopentanoate. This is 3-isopropylmalate dehydrogenase from Bacillus cereus (strain ATCC 14579 / DSM 31 / CCUG 7414 / JCM 2152 / NBRC 15305 / NCIMB 9373 / NCTC 2599 / NRRL B-3711).